The following is a 718-amino-acid chain: Methionine--tRNA ligase (718 aa).

The short motif at proline 12–histidine 22 is the 'HIGH' region element. 4 residues coordinate Zn(2+): cysteine 143, cysteine 146, cysteine 156, and cysteine 159. A 'KMSKS' region motif is present at residues lysine 349 to serine 353. Lysine 352 serves as a coordination point for ATP. Residues alanine 573 to threonine 599 are disordered. A tRNA-binding domain is found at aspartate 608 to lysine 718.

It belongs to the class-I aminoacyl-tRNA synthetase family. MetG type 1 subfamily. As to quaternary structure, homodimer. Requires Zn(2+) as cofactor.

The protein resides in the cytoplasm. The enzyme catalyses tRNA(Met) + L-methionine + ATP = L-methionyl-tRNA(Met) + AMP + diphosphate. Is required not only for elongation of protein synthesis but also for the initiation of all mRNA translation through initiator tRNA(fMet) aminoacylation. The polypeptide is Methionine--tRNA ligase (Aromatoleum aromaticum (strain DSM 19018 / LMG 30748 / EbN1) (Azoarcus sp. (strain EbN1))).